A 560-amino-acid chain; its full sequence is MKVWMAILISILCWQSSAWAVCPAWSPARAQEEISRLQQQIKQWDDDYWKEGKSEVEDGVYDQLSARLTQWQRCFGNETRDAMMPPLNGAVMHPVAHTGVRKMADKNALSLWMRERSDLWVQPKVDGVAVTLVYRDGKLNKAISRGNGLKGEDWTQKVRLISAVPQTVSGPLANSTLQGEIFLKRKGHIQQQMGGINARAKVAGLMMRQGNSDTLNSLAVFVWAWPDGPQLMTDRLKELATAGFTLTQTYTRAVKNADEVAHVRNEWWKAKLPFVTDGVVVRAAKEPESRHWLPGQAEWLVAWKYQPVAQVAEVKAIQFAVGKSGKISVVASLVPVMLDDKKVQRVNIGSVRHWQEWDIAPGDQILVSLAGQGIPRIDDVVWRGAERTKPTPPENRFNSLTCYFASDVCQEQFISRLVWLGSKQVLGLDGIGEAGWRALHQTHRFEHIFSWLLLTPEQLQNTPGIAKSKSAQLWHQFNLARQQPFTRWVMAMGIPLTRAALNASDERSWSQLLFSTEQFWQQLPGTGSGRARQVIEWKENAQIKKLGSWLAAQQITGFEP.

K124 serves as the catalytic N6-AMP-lysine intermediate.

It belongs to the NAD-dependent DNA ligase family. LigB subfamily.

The catalysed reaction is NAD(+) + (deoxyribonucleotide)n-3'-hydroxyl + 5'-phospho-(deoxyribonucleotide)m = (deoxyribonucleotide)n+m + AMP + beta-nicotinamide D-nucleotide.. Functionally, catalyzes the formation of phosphodiester linkages between 5'-phosphoryl and 3'-hydroxyl groups in double-stranded DNA using NAD as a coenzyme and as the energy source for the reaction. The protein is DNA ligase B of Escherichia coli O7:K1 (strain IAI39 / ExPEC).